Here is a 241-residue protein sequence, read N- to C-terminus: LexA repressor (241 aa).

Positions 41–61 (FREIGNAAGLKSPSSVKHQLQ) form a DNA-binding region, H-T-H motif. Residues Ser165 and Lys202 each act as for autocatalytic cleavage activity in the active site.

It belongs to the peptidase S24 family. In terms of assembly, homodimer.

It catalyses the reaction Hydrolysis of Ala-|-Gly bond in repressor LexA.. Functionally, represses a number of genes involved in the response to DNA damage (SOS response), including recA and lexA. In the presence of single-stranded DNA, RecA interacts with LexA causing an autocatalytic cleavage which disrupts the DNA-binding part of LexA, leading to derepression of the SOS regulon and eventually DNA repair. In Bifidobacterium longum (strain DJO10A), this protein is LexA repressor.